The chain runs to 66 residues: Phylloseptin-S4 (66 aa).

A signal peptide spans 1-22; sequence MAFLKKSLFLVLFLGLVSLSIC. Positions 23 to 46 are excised as a propeptide; the sequence is EEEKRETEEEEHDQEEDDKSEEKR. Positions 25-44 are disordered; it reads EKRETEEEEHDQEEDDKSEE. The span at 30–41 shows a compositional bias: acidic residues; that stretch reads EEEEHDQEEDDK. At leucine 65 the chain carries Leucine amide.

In terms of tissue distribution, expressed by the skin glands.

The protein resides in the secreted. It localises to the target cell membrane. In terms of biological role, antimicrobial peptide with high activity against Gram-positive bacteria, moderate activity against Gram-negative bacteria, and moderate activity against fungi. Acts by causing bacterial membrane disruption inducing leakage of the intracellular content followed by cell death. It adopts an alpha-helical amphipathic structure in membrane environments. Also shows highly potent antiparasitic activity against Leishmania species. Shows moderate hemolytic activity on human erythrocytes (LC(50)=33 uM). Is also active on human monocytes (IC(50)=23 uM). The sequence is that of Phylloseptin-S4 from Phyllomedusa sauvagei (Sauvage's leaf frog).